We begin with the raw amino-acid sequence, 256 residues long: Imidazole glycerol phosphate synthase subunit HisF (256 aa).

Active-site residues include aspartate 11 and aspartate 130.

This sequence belongs to the HisA/HisF family. Heterodimer of HisH and HisF.

It is found in the cytoplasm. It catalyses the reaction 5-[(5-phospho-1-deoxy-D-ribulos-1-ylimino)methylamino]-1-(5-phospho-beta-D-ribosyl)imidazole-4-carboxamide + L-glutamine = D-erythro-1-(imidazol-4-yl)glycerol 3-phosphate + 5-amino-1-(5-phospho-beta-D-ribosyl)imidazole-4-carboxamide + L-glutamate + H(+). It participates in amino-acid biosynthesis; L-histidine biosynthesis; L-histidine from 5-phospho-alpha-D-ribose 1-diphosphate: step 5/9. In terms of biological role, IGPS catalyzes the conversion of PRFAR and glutamine to IGP, AICAR and glutamate. The HisF subunit catalyzes the cyclization activity that produces IGP and AICAR from PRFAR using the ammonia provided by the HisH subunit. The chain is Imidazole glycerol phosphate synthase subunit HisF from Prochlorococcus marinus (strain MIT 9301).